Consider the following 403-residue polypeptide: L-cysteine:1D-myo-inositol 2-amino-2-deoxy-alpha-D-glucopyranoside ligase (403 aa).

C43 lines the Zn(2+) pocket. L-cysteinyl-5'-AMP contacts are provided by residues 43-46 (CGIT), T58, and 81-83 (NTT). The short motif at 45-55 (ITPYDATHLGH) is the 'HIGH' region element. The 'ERGGDP' region signature appears at 183 to 188 (ERGGDP). W223 provides a ligand contact to L-cysteinyl-5'-AMP. C227 serves as a coordination point for Zn(2+). Residue 245–247 (GSD) coordinates L-cysteinyl-5'-AMP. H252 provides a ligand contact to Zn(2+). V279 contacts L-cysteinyl-5'-AMP. A 'KMSKS' region motif is present at residues 285-289 (KMSKS).

Belongs to the class-I aminoacyl-tRNA synthetase family. MshC subfamily. In terms of assembly, monomer. Zn(2+) serves as cofactor.

It catalyses the reaction 1D-myo-inositol 2-amino-2-deoxy-alpha-D-glucopyranoside + L-cysteine + ATP = 1D-myo-inositol 2-(L-cysteinylamino)-2-deoxy-alpha-D-glucopyranoside + AMP + diphosphate + H(+). In terms of biological role, catalyzes the ATP-dependent condensation of GlcN-Ins and L-cysteine to form L-Cys-GlcN-Ins. In Thermobispora bispora (strain ATCC 19993 / DSM 43833 / CBS 139.67 / JCM 10125 / KCTC 9307 / NBRC 14880 / R51), this protein is L-cysteine:1D-myo-inositol 2-amino-2-deoxy-alpha-D-glucopyranoside ligase.